We begin with the raw amino-acid sequence, 249 residues long: MPIRNIAVGTPQEATHPDTLKAGLAEFISTFIFVFAGSGSGIAYNKLTNDGAATPAGLISASIAHAFALFVAVSVGANISGGHVNPAVFGAFVGGNITLLRGIVYIIAQLLGSIVCSALLVFVTASSVPAFGLSEGVGVGPALVLEIVMTFGLVYTVYATAVDPKKGNIGIIAPIAIGFIVGANILVGGAFTGASMNPAVSFGPAVVSWSWSNHWVYWAGPLIGGGIAGLVYEVLFINSTHEQLPTTDY.

Transmembrane regions (helical) follow at residues 22–42 (AGLA…GSGI) and 56–76 (AGLI…VSVG). Residues 85-87 (NPA) carry the NPA 1 motif. Helical transmembrane passes span 103–123 (IVYI…LVFV), 137–157 (VGVG…VYTV), and 169–189 (IGII…LVGG). The short motif at 197 to 199 (NPA) is the NPA 2 element. Residues 217-237 (YWAGPLIGGGIAGLVYEVLFI) traverse the membrane as a helical segment.

This sequence belongs to the MIP/aquaporin (TC 1.A.8) family. TIP (TC 1.A.8.10) subfamily. In terms of tissue distribution, expression is highest in root tips, with slightly lower levels of hybridizing mRNA in stems, and whole roots, and much lower levels in nodules and leaves.

The protein resides in the membrane. Functionally, aquaporins facilitate the transport of water and small neutral solutes across cell membranes. The sequence is that of Probable aquaporin TIP-type (MCP1) from Medicago sativa (Alfalfa).